Reading from the N-terminus, the 269-residue chain is GTP cyclohydrolase FolE2 (269 aa).

Belongs to the GTP cyclohydrolase IV family.

It catalyses the reaction GTP + H2O = 7,8-dihydroneopterin 3'-triphosphate + formate + H(+). Its pathway is cofactor biosynthesis; 7,8-dihydroneopterin triphosphate biosynthesis; 7,8-dihydroneopterin triphosphate from GTP: step 1/1. In terms of biological role, converts GTP to 7,8-dihydroneopterin triphosphate. This chain is GTP cyclohydrolase FolE2, found in Burkholderia vietnamiensis (strain G4 / LMG 22486) (Burkholderia cepacia (strain R1808)).